Here is a 102-residue protein sequence, read N- to C-terminus: Small ribosomal subunit protein uS10 (102 aa).

It belongs to the universal ribosomal protein uS10 family. In terms of assembly, part of the 30S ribosomal subunit.

In terms of biological role, involved in the binding of tRNA to the ribosomes. The chain is Small ribosomal subunit protein uS10 from Methanosarcina mazei (strain ATCC BAA-159 / DSM 3647 / Goe1 / Go1 / JCM 11833 / OCM 88) (Methanosarcina frisia).